We begin with the raw amino-acid sequence, 905 residues long: DNA gyrase subunit A (905 aa).

The Topo IIA-type catalytic domain maps to 35-524 (IPDVRDGLKP…GEFDQDIEDL (490 aa)). The active-site O-(5'-phospho-DNA)-tyrosine intermediate is Y123. The short motif at 551 to 557 (QKRGGKG) is the GyrA-box element.

This sequence belongs to the type II topoisomerase GyrA/ParC subunit family. Heterotetramer, composed of two GyrA and two GyrB chains. In the heterotetramer, GyrA contains the active site tyrosine that forms a transient covalent intermediate with DNA, while GyrB binds cofactors and catalyzes ATP hydrolysis.

The protein localises to the cytoplasm. It catalyses the reaction ATP-dependent breakage, passage and rejoining of double-stranded DNA.. Its function is as follows. A type II topoisomerase that negatively supercoils closed circular double-stranded (ds) DNA in an ATP-dependent manner to modulate DNA topology and maintain chromosomes in an underwound state. Negative supercoiling favors strand separation, and DNA replication, transcription, recombination and repair, all of which involve strand separation. Also able to catalyze the interconversion of other topological isomers of dsDNA rings, including catenanes and knotted rings. Type II topoisomerases break and join 2 DNA strands simultaneously in an ATP-dependent manner. This Rickettsia prowazekii (strain Madrid E) protein is DNA gyrase subunit A.